A 315-amino-acid chain; its full sequence is Acetyl-coenzyme A carboxylase carboxyl transferase subunit alpha (315 aa).

The region spanning 40–293 (LQDKSKTLTE…RAELSSQLAM (254 aa)) is the CoA carboxyltransferase C-terminal domain.

The protein belongs to the AccA family. In terms of assembly, acetyl-CoA carboxylase is a heterohexamer composed of biotin carboxyl carrier protein (AccB), biotin carboxylase (AccC) and two subunits each of ACCase subunit alpha (AccA) and ACCase subunit beta (AccD).

The protein resides in the cytoplasm. It carries out the reaction N(6)-carboxybiotinyl-L-lysyl-[protein] + acetyl-CoA = N(6)-biotinyl-L-lysyl-[protein] + malonyl-CoA. Its pathway is lipid metabolism; malonyl-CoA biosynthesis; malonyl-CoA from acetyl-CoA: step 1/1. Functionally, component of the acetyl coenzyme A carboxylase (ACC) complex. First, biotin carboxylase catalyzes the carboxylation of biotin on its carrier protein (BCCP) and then the CO(2) group is transferred by the carboxyltransferase to acetyl-CoA to form malonyl-CoA. The polypeptide is Acetyl-coenzyme A carboxylase carboxyl transferase subunit alpha (Pseudomonas fluorescens (strain Pf0-1)).